A 576-amino-acid polypeptide reads, in one-letter code: Nuclear/nucleolar GTPase 2 (576 aa).

2 disordered regions span residues 1–61 (MVKK…SNEY) and 166–186 (QDAF…EEED). The span at 16–34 (HSLDANRADGKKKTTETRS) shows a compositional bias: basic and acidic residues. Positions 42 to 52 (KMYKTRPKRNA) are enriched in basic residues. In terms of domain architecture, CP-type G spans 206–367 (WGELYKVIDS…LIDCPGVVYQ (162 aa)). The DARXP motif signature appears at 224-228 (DARDP). The segment at 254-257 (NKCD) is G4. 254 to 257 (NKCD) contributes to the GTP binding site. A G5 region spans residues 283–285 (SVN). The G1 stretch occupies residues 316–323 (GYPNVGKS). GTP is bound at residue 319 to 324 (NVGKSS). Residues 342–346 (GETKV) form a G2 region. The segment at 360-363 (DCPG) is G3. GTP is bound at residue Gly363. A disordered region spans residues 502 to 576 (TQQQKDVPVQ…DEEDESDSAE (75 aa)). Residues 509–530 (PVQRDFYDEKDLKDDKKAKEST) show a composition bias toward basic and acidic residues. Over residues 531-576 (ETDAENGTDAEEDEDAVSEDGVESDSDADEDAVSENDEEDESDSAE) the composition is skewed to acidic residues.

Belongs to the TRAFAC class YlqF/YawG GTPase family. RsgA subfamily. In terms of assembly, interacts with the 60S ribosomal proteins RPL10AA, RPL10AB and RPL10AC. As to expression, ubiquitous, with higher levels in meristematic regions.

Its subcellular location is the nucleus. It localises to the nucleolus. The GTPase activity is stimulated in the presence of the 60S ribosomal subunit. GTPase involved in pre-60S ribosomal subunit maturation. In Arabidopsis thaliana (Mouse-ear cress), this protein is Nuclear/nucleolar GTPase 2.